A 184-amino-acid polypeptide reads, in one-letter code: dCTP deaminase (184 aa).

Residues 107 to 112 (KSTYAR), 131 to 133 (TLE), Gln152, Tyr166, and Gln176 each bind dCTP. Glu133 functions as the Proton donor/acceptor in the catalytic mechanism.

The protein belongs to the dCTP deaminase family. As to quaternary structure, homotrimer.

The enzyme catalyses dCTP + H2O + H(+) = dUTP + NH4(+). Its pathway is pyrimidine metabolism; dUMP biosynthesis; dUMP from dCTP (dUTP route): step 1/2. Functionally, catalyzes the deamination of dCTP to dUTP. In Erythrobacter litoralis (strain HTCC2594), this protein is dCTP deaminase.